The chain runs to 136 residues: Urease subunit beta (136 aa).

Positions 113–136 (NDEYAGVFGDNGAENVNKKGRKRS) are disordered.

The protein belongs to the urease beta subunit family. In terms of assembly, heterotrimer of UreA (gamma), UreB (beta) and UreC (alpha) subunits. Three heterotrimers associate to form the active enzyme.

It is found in the cytoplasm. The catalysed reaction is urea + 2 H2O + H(+) = hydrogencarbonate + 2 NH4(+). Its pathway is nitrogen metabolism; urea degradation; CO(2) and NH(3) from urea (urease route): step 1/1. The chain is Urease subunit beta from Staphylococcus aureus (strain Newman).